Consider the following 491-residue polypeptide: Glucose-6-phosphate 1-dehydrogenase (491 aa).

NADP(+) contacts are provided by residues R50, 92-93 (DV), and K147. Positions 177, 181, 215, and 234 each coordinate substrate. The active-site Proton acceptor is H239. Residues K339 and K344 each contribute to the substrate site.

The protein belongs to the glucose-6-phosphate dehydrogenase family.

The enzyme catalyses D-glucose 6-phosphate + NADP(+) = 6-phospho-D-glucono-1,5-lactone + NADPH + H(+). Its pathway is carbohydrate degradation; pentose phosphate pathway; D-ribulose 5-phosphate from D-glucose 6-phosphate (oxidative stage): step 1/3. In terms of biological role, catalyzes the oxidation of glucose 6-phosphate to 6-phosphogluconolactone. This Dickeya dadantii (strain 3937) (Erwinia chrysanthemi (strain 3937)) protein is Glucose-6-phosphate 1-dehydrogenase.